The following is a 376-amino-acid chain: UPF0754 membrane protein SERP1382 (376 aa).

The next 2 helical transmembrane spans lie at 4–24 and 356–376; these read ILLV…TNMI and TLGF…AIFV.

The protein belongs to the UPF0754 family.

The protein localises to the cell membrane. This is UPF0754 membrane protein SERP1382 from Staphylococcus epidermidis (strain ATCC 35984 / DSM 28319 / BCRC 17069 / CCUG 31568 / BM 3577 / RP62A).